The primary structure comprises 205 residues: Holliday junction branch migration complex subunit RuvA (205 aa).

The tract at residues 1 to 64 is domain I; sequence MIGKLKGLID…EDQIKLFGFR (64 aa). Residues 65–143 are domain II; sequence SDVEREWFRL…AFADVDPGVI (79 aa). Positions 144 to 154 are flexible linker; sequence RLSGAIEDSRA. Residues 154-205 form a domain III region; it reads APQPIADAISALINLGYGQPQAAAAIAAASRAAGDKAETAQLIRLGLKELAK.

The protein belongs to the RuvA family. Homotetramer. Forms an RuvA(8)-RuvB(12)-Holliday junction (HJ) complex. HJ DNA is sandwiched between 2 RuvA tetramers; dsDNA enters through RuvA and exits via RuvB. An RuvB hexamer assembles on each DNA strand where it exits the tetramer. Each RuvB hexamer is contacted by two RuvA subunits (via domain III) on 2 adjacent RuvB subunits; this complex drives branch migration. In the full resolvosome a probable DNA-RuvA(4)-RuvB(12)-RuvC(2) complex forms which resolves the HJ.

The protein resides in the cytoplasm. Functionally, the RuvA-RuvB-RuvC complex processes Holliday junction (HJ) DNA during genetic recombination and DNA repair, while the RuvA-RuvB complex plays an important role in the rescue of blocked DNA replication forks via replication fork reversal (RFR). RuvA specifically binds to HJ cruciform DNA, conferring on it an open structure. The RuvB hexamer acts as an ATP-dependent pump, pulling dsDNA into and through the RuvAB complex. HJ branch migration allows RuvC to scan DNA until it finds its consensus sequence, where it cleaves and resolves the cruciform DNA. This Bradyrhizobium sp. (strain BTAi1 / ATCC BAA-1182) protein is Holliday junction branch migration complex subunit RuvA.